The primary structure comprises 180 residues: Ribulose bisphosphate carboxylase small subunit, chloroplastic (180 aa).

The N-terminal 56 residues, 1-56, are a transit peptide targeting the chloroplast; sequence MASSIMSSAAVATRSNGAQASMVAPFTGLKSNASFPVSRKTNLDITSIASNGGRVR.

Belongs to the RuBisCO small chain family. In terms of assembly, heterohexadecamer of 8 large and 8 small subunits.

Its subcellular location is the plastid. It localises to the chloroplast. Functionally, ruBisCO catalyzes two reactions: the carboxylation of D-ribulose 1,5-bisphosphate, the primary event in carbon dioxide fixation, as well as the oxidative fragmentation of the pentose substrate. Both reactions occur simultaneously and in competition at the same active site. Although the small subunit is not catalytic it is essential for maximal activity. In Stellaria longipes (Longstalk starwort), this protein is Ribulose bisphosphate carboxylase small subunit, chloroplastic.